Reading from the N-terminus, the 1674-residue chain is Kinesin-like protein KIF14 (1674 aa).

The required for PRC1-binding stretch occupies residues 1–391; the sequence is MSVHTSHSRH…TEPDSLKVEN (391 aa). Disordered stretches follow at residues 132 to 158 and 171 to 374; these read ETLN…KGVN and KDSN…PEEN. Polar residues-rich tracts occupy residues 142–151 and 202–214; these read GSDSASQASR and SRAP…QTEA. Phosphoserine is present on S257. T262 is subject to Phosphothreonine. A compositionally biased stretch (basic and acidic residues) spans 267-279; it reads VLEHRWTPRHDPP. A compositionally biased stretch (polar residues) spans 302–311; the sequence is TFRSASSESR. The span at 317–329 shows a compositional bias: basic and acidic residues; sequence VPEHRWTPRHDLP. Residues 391–772 form a required for microtubule-binding with high affinity region; sequence NSQVTVAVRV…AAQRSNRNID (382 aa). The Kinesin motor domain maps to 393 to 736; sequence QVTVAVRVRP…LRYATQARLI (344 aa). Residue 482-489 coordinates ATP; it reads GQTGSGKS. Residues 743–826 are a coiled coil; it reads NEDMNAKLIR…QETKELQKAG (84 aa). The FHA domain occupies 860–911; it reads TTVGKHTPSSSHDIQLSGVLIADDHCTIRNFGGTVSIVPAGEAKTYVNGTHI. A required for CIT-binding region spans residues 936–1674; that stretch reads PVEVQKGKKL…DCTPNRIQWV (739 aa). The stretch at 961 to 1110 forms a coiled coil; that stretch reads EFAKNELLTA…VQMLQENRGN (150 aa). 2 positions are modified to phosphoserine: S973 and S1326. Positions 1618 to 1674 are disordered; the sequence is GLSKPWESCSSNSKEEQCKSDRADCGKSGPRRACEPHGDATPAVSSGDCTPNRIQWV. Positions 1630 to 1642 are enriched in basic and acidic residues; it reads SKEEQCKSDRADC. Residues 1660 to 1674 show a composition bias toward polar residues; that stretch reads AVSSGDCTPNRIQWV.

Belongs to the TRAFAC class myosin-kinesin ATPase superfamily. Kinesin family. As to quaternary structure, directly interacts with PRC1 within a complex also containing KIF4A, KIF20A and KIF23; targets to the central spindle. Directly interacts with CIT depending on the activation state of the kinase (stronger interaction with the kinase-dead form); targets to the midbody. Interacts with ARRB2; the interaction is detected in the nucleus upon OR1D2 stimulation. Interacts with AKT1; the interaction is detected in the plasma membrane upon INS stimulation and promotes AKT1 phosphorylation. Interacts with SVIL; at midbody during cytokinesis. Interacts with RADIL (via PDZ domain); recruits RADIL to the microtubule network restricting RADIL from interaction with activated RAP1A.

It is found in the nucleus. The protein resides in the cytoplasm. The protein localises to the cytoskeleton. It localises to the spindle. Its subcellular location is the midbody. Its function is as follows. Microtubule motor protein that binds to microtubules with high affinity through each tubulin heterodimer and has an ATPase activity. Plays a role in many processes like cell division, cytokinesis and also in cell proliferation and apoptosis. During cytokinesis, targets to central spindle and midbody through its interaction with PRC1 and CIT respectively. Regulates cell growth through regulation of cell cycle progression and cytokinesis. During cell cycle progression acts through SCF-dependent proteasomal ubiquitin-dependent protein catabolic process which controls CDKN1B degradation, resulting in positive regulation of cyclins, including CCNE1, CCND1 and CCNB1. During late neurogenesis, regulates the cerebellar and cerebral cortex development and olfactory bulb development through regulation of apoptosis, cell proliferation and cell division. Also is required for chromosome congression and alignment during mitotic cell cycle process. Regulates cell spreading, focal adhesion dynamics, and cell migration through its interaction with RADIL resulting in regulation of RAP1A-mediated inside-out integrin activation by tethering RADIL on microtubules. The chain is Kinesin-like protein KIF14 from Mus musculus (Mouse).